The following is a 230-amino-acid chain: Ureidoacrylate amidohydrolase RutB (230 aa).

Asp-24 acts as the Proton acceptor in catalysis. Residue Lys-133 is part of the active site. Residue Cys-166 is the Nucleophile of the active site.

The protein belongs to the isochorismatase family. RutB subfamily.

It catalyses the reaction (Z)-3-ureidoacrylate + H2O + H(+) = (Z)-3-aminoacrylate + NH4(+) + CO2. The enzyme catalyses (Z)-3-ureidoacrylate + H2O = (Z)-3-aminoacrylate + carbamate + H(+). It carries out the reaction (Z)-2-methylureidoacrylate + H2O + H(+) = (Z)-2-methylaminoacrylate + NH4(+) + CO2. Functionally, hydrolyzes ureidoacrylate to form aminoacrylate and carbamate. The carbamate hydrolyzes spontaneously, thereby releasing one of the nitrogen atoms of the pyrimidine ring as ammonia and one of its carbon atoms as CO2. The chain is Ureidoacrylate amidohydrolase RutB from Enterobacter sp. (strain 638).